A 169-amino-acid chain; its full sequence is S-ribosylhomocysteine lyase (169 aa).

3 residues coordinate Fe cation: His54, His58, and Cys129.

The protein belongs to the LuxS family. Homodimer. Fe cation serves as cofactor.

It catalyses the reaction S-(5-deoxy-D-ribos-5-yl)-L-homocysteine = (S)-4,5-dihydroxypentane-2,3-dione + L-homocysteine. Functionally, involved in the synthesis of autoinducer 2 (AI-2) which is secreted by bacteria and is used to communicate both the cell density and the metabolic potential of the environment. The regulation of gene expression in response to changes in cell density is called quorum sensing. Catalyzes the transformation of S-ribosylhomocysteine (RHC) to homocysteine (HC) and 4,5-dihydroxy-2,3-pentadione (DPD). The protein is S-ribosylhomocysteine lyase of Haemophilus ducreyi (strain 35000HP / ATCC 700724).